Here is a 265-residue protein sequence, read N- to C-terminus: MSESLSVLLTNDDGIDAVGIQALYQAFDDIAEVTVVAPTDDQSAVGRQLSSDVTIHEHDWGYGIDGTPADCVVAGVEALCPDVDLVIAGCNKGANIGAYVLGRSGTVSAAVESTFFDVPAMAVSMYIPGGGDTPWHKQATEVSAFADASRAATYLARHAFDAGVFEQADYLNINAPVAANEPATLEVTRPSRVYDMTAEHDGNGTVTLHDRVWERMRTDDIPDPSGTDRRAVVDGHISVSPLAAPHTTEHHEALDALASTYLDSI.

A divalent metal cation contacts are provided by Asp12, Asp13, Ser43, and Asn91.

Belongs to the SurE nucleotidase family. It depends on a divalent metal cation as a cofactor.

It localises to the cytoplasm. The enzyme catalyses a ribonucleoside 5'-phosphate + H2O = a ribonucleoside + phosphate. Functionally, nucleotidase that shows phosphatase activity on nucleoside 5'-monophosphates. The protein is 5'-nucleotidase SurE of Haloquadratum walsbyi (strain DSM 16790 / HBSQ001).